The following is a 968-amino-acid chain: RNA polymerase-associated protein RapA (968 aa).

One can recognise a Helicase ATP-binding domain in the interval 163–332 (EVGRRYAPRV…FARLRLLDPD (170 aa)). ATP is bound at residue 176-183 (DEVGLGKT). The DEAH box signature appears at 278 to 281 (DEAH). A Helicase C-terminal domain is found at 491-643 (RVDWLIAFLK…ELTCPSGHVL (153 aa)).

Belongs to the SNF2/RAD54 helicase family. RapA subfamily. As to quaternary structure, interacts with the RNAP. Has a higher affinity for the core RNAP than for the holoenzyme. Its ATPase activity is stimulated by binding to RNAP.

Functionally, transcription regulator that activates transcription by stimulating RNA polymerase (RNAP) recycling in case of stress conditions such as supercoiled DNA or high salt concentrations. Probably acts by releasing the RNAP, when it is trapped or immobilized on tightly supercoiled DNA. Does not activate transcription on linear DNA. Probably not involved in DNA repair. The protein is RNA polymerase-associated protein RapA of Shewanella sp. (strain W3-18-1).